The sequence spans 379 residues: tRNA-specific 2-thiouridylase MnmA (379 aa).

ATP contacts are provided by residues 9–16 (AMSGGVDS) and Met35. An interaction with target base in tRNA region spans residues 94–96 (NPD). The Nucleophile role is filled by Cys99. Residues Cys99 and Cys195 are joined by a disulfide bond. Gly123 provides a ligand contact to ATP. The segment at 145–147 (KDQ) is interaction with tRNA. Cys195 (cysteine persulfide intermediate) is an active-site residue. The segment at 307–308 (RY) is interaction with tRNA.

This sequence belongs to the MnmA/TRMU family.

Its subcellular location is the cytoplasm. The enzyme catalyses S-sulfanyl-L-cysteinyl-[protein] + uridine(34) in tRNA + AH2 + ATP = 2-thiouridine(34) in tRNA + L-cysteinyl-[protein] + A + AMP + diphosphate + H(+). In terms of biological role, catalyzes the 2-thiolation of uridine at the wobble position (U34) of tRNA, leading to the formation of s(2)U34. This Xylella fastidiosa (strain 9a5c) protein is tRNA-specific 2-thiouridylase MnmA.